A 477-amino-acid chain; its full sequence is Pentatricopeptide repeat-containing protein At5g47360 (477 aa).

9 PPR repeats span residues 129-163 (NVKT…NVCA), 164-198 (DTVA…GLYP), 199-233 (DVIT…DCVL), 234-264 (NSVT…MEKE), 273-307 (NAVT…GCMP), 308-343 (NRVT…GGVS), 344-378 (LSEC…GVRP), 379-413 (DGLA…DVKS), and 416-450 (DSDI…KMRL).

Belongs to the PPR family. P subfamily.

The chain is Pentatricopeptide repeat-containing protein At5g47360 from Arabidopsis thaliana (Mouse-ear cress).